We begin with the raw amino-acid sequence, 144 residues long: SVVKSEDYALPSYVDRRDYPLPDVAHVRHLSASQKALKEKEKASWSSLSMDEKVELYRIQFKESFAEMNRGSNEWKTVVGAAMFFIGFTAILIILEKRYVYGPLPHTFDKEWVAMQTKRMLDLKVNPVDGLASKWDYDKKEWKK.

Over 1 to 73 (SVVKSEDYAL…SFAEMNRGSN (73 aa)) the chain is Mitochondrial matrix. Lysine 4 carries the post-translational modification N6-acetyllysine; alternate. Position 4 is an N6-succinyllysine; alternate (lysine 4). Phosphoserine is present on residues serine 31 and serine 33. An N6-acetyllysine; alternate modification is found at lysine 35. Lysine 35 bears the N6-succinyllysine; alternate mark. Position 42 is an N6-acetyllysine (lysine 42). The chain crosses the membrane as a helical span at residues 74 to 99 (EWKTVVGAAMFFIGFTAILIILEKRY). Residues 100 to 144 (VYGPLPHTFDKEWVAMQTKRMLDLKVNPVDGLASKWDYDKKEWKK) lie on the Mitochondrial intermembrane side of the membrane.

Belongs to the cytochrome c oxidase IV family. As to quaternary structure, component of the cytochrome c oxidase (complex IV, CIV), a multisubunit enzyme composed of 14 subunits. The complex is composed of a catalytic core of 3 subunits MT-CO1, MT-CO2 and MT-CO3, encoded in the mitochondrial DNA, and 11 supernumerary subunits COX4I, COX5A, COX5B, COX6A, COX6B, COX6C, COX7A, COX7B, COX7C, COX8 and NDUFA4, which are encoded in the nuclear genome. The complex exists as a monomer or a dimer and forms supercomplexes (SCs) in the inner mitochondrial membrane with NADH-ubiquinone oxidoreductase (complex I, CI) and ubiquinol-cytochrome c oxidoreductase (cytochrome b-c1 complex, complex III, CIII), resulting in different assemblies (supercomplex SCI(1)III(2)IV(1) and megacomplex MCI(2)III(2)IV(2)). Interacts with PHB2; the interaction decreases in absence of SPHK2. Interacts with AFG1L. Interacts with ABCB7; this interaction allows the regulation of cellular iron homeostasis and cellular reactive oxygen species (ROS) levels in cardiomyocytes. Interacts with FLVCR2; this interaction occurs in the absence of heme and is disrupted upon heme binding. Interacts with IRGC.

Its subcellular location is the mitochondrion inner membrane. It participates in energy metabolism; oxidative phosphorylation. Component of the cytochrome c oxidase, the last enzyme in the mitochondrial electron transport chain which drives oxidative phosphorylation. The respiratory chain contains 3 multisubunit complexes succinate dehydrogenase (complex II, CII), ubiquinol-cytochrome c oxidoreductase (cytochrome b-c1 complex, complex III, CIII) and cytochrome c oxidase (complex IV, CIV), that cooperate to transfer electrons derived from NADH and succinate to molecular oxygen, creating an electrochemical gradient over the inner membrane that drives transmembrane transport and the ATP synthase. Cytochrome c oxidase is the component of the respiratory chain that catalyzes the reduction of oxygen to water. Electrons originating from reduced cytochrome c in the intermembrane space (IMS) are transferred via the dinuclear copper A center (CU(A)) of subunit 2 and heme A of subunit 1 to the active site in subunit 1, a binuclear center (BNC) formed by heme A3 and copper B (CU(B)). The BNC reduces molecular oxygen to 2 water molecules using 4 electrons from cytochrome c in the IMS and 4 protons from the mitochondrial matrix. The protein is Cytochrome c oxidase subunit 4 isoform 1, mitochondrial (COX4I1) of Aotus azarae (Azara's night monkey).